Consider the following 945-residue polypeptide: MSELSRFFIELGERWQRRWREARVFEPEPAPGVPKYFITAAYPYPNGAIHIGHGRTYLVADVMARFQRHLGRSVLFPMGFHYTGTPILTIAEVIAAGDKAVMEEYMELYGVPEEEIKKMGDPLYLARYFHGQSKRAMERFGLSIDWTREFTTIDPEYQRFIQWQFEKLRKKGLIVRGRHPVGWCPRHSMPVGAHDTKDDKEPDIGQWTLVYFTDSEGLTFPTATLRPETVLGVTNLWINPDAEYVVAEFDGRRAVVSRDAAYRLSFQVGVKILREARGREFVGRMVQNPVTGEWVPVYEARFVDPKVGTGVVMSVPAHAPYDYAALRDLGTVKLIPLIRVEGYGDYPAKEVVERMGIKSQADPALEDATKEVYSAEYARGVMREDVAERVGAHLEEPARSMLRAVFKMYFAGRPVREAREFIARWLTEARLGGVMYDIMNKPVYCRCGTEIVVKVLEDQWFINYGESRWKEAARELVKEMSIVPGEARAQFLATIDWLDKRACARTRGLGTPLPWSSGWVIESLSDSTIYMAFYTVVKRIRQFGIRPEQLTEEFWDFVFLGQGSADEVSKKTGVPVEALKAIREEFEYWYPLDSRNSGKDLIPNHLTFFIFNHVAIFPREKWPRQIVANGWVLREGEKMSKSKRNVLPLDRAVEMYGPDPLRATLALAAEVEQDLDFRDAEARRNAQQLMSIYTLAQRLVQGAEERPPTWVDQWLVAEISRVLERAREAYEKVRVRQAAVEVLYNAKAVFDQYLAMVEKPSRQAVEAAKAWAVAMEPLVPHLAEELWATLGGAGFAALAPWPKLRAEPAALLAKRYVDMLIEDVKNIPAFGQGAKRVVIYVNRSFAWVKAALAGDVKTVIGAGVPPQQAKKVVDLVKTLGDEMRGLIAAVDHFDELEALRSYRNYVEKALGAPVEIYGADDPAAPDLGGKKRVALPLKPGIYVEK.

Residues 43–53 (PYPNGAIHIGH) carry the 'HIGH' region motif. Residues 638-642 (KMSKS) carry the 'KMSKS' region motif. Position 641 (Lys641) interacts with ATP.

This sequence belongs to the class-I aminoacyl-tRNA synthetase family.

It localises to the cytoplasm. It catalyses the reaction tRNA(Leu) + L-leucine + ATP = L-leucyl-tRNA(Leu) + AMP + diphosphate. The sequence is that of Leucine--tRNA ligase from Pyrobaculum neutrophilum (strain DSM 2338 / JCM 9278 / NBRC 100436 / V24Sta) (Thermoproteus neutrophilus).